The chain runs to 224 residues: ATP phosphoribosyltransferase (224 aa).

It belongs to the ATP phosphoribosyltransferase family. Short subfamily. As to quaternary structure, heteromultimer composed of HisG and HisZ subunits.

The protein resides in the cytoplasm. It catalyses the reaction 1-(5-phospho-beta-D-ribosyl)-ATP + diphosphate = 5-phospho-alpha-D-ribose 1-diphosphate + ATP. It participates in amino-acid biosynthesis; L-histidine biosynthesis; L-histidine from 5-phospho-alpha-D-ribose 1-diphosphate: step 1/9. Catalyzes the condensation of ATP and 5-phosphoribose 1-diphosphate to form N'-(5'-phosphoribosyl)-ATP (PR-ATP). Has a crucial role in the pathway because the rate of histidine biosynthesis seems to be controlled primarily by regulation of HisG enzymatic activity. This chain is ATP phosphoribosyltransferase, found in Cupriavidus metallidurans (strain ATCC 43123 / DSM 2839 / NBRC 102507 / CH34) (Ralstonia metallidurans).